Reading from the N-terminus, the 157-residue chain is MLVTSSRKPSARTRTLCKLLSRFIAGRCMTRGKMGMQELLEFAEGGPLIVIGEYHGNPGELSFYDEAGELLFSLRFTDWYSKELDSYWFSGIEPKLAGQGEIAEAFKVFFHFQRVENDKIDQLPPSSTLIVVGENDIDFMGSGKSLFKLNLRGFKKY.

The Brix domain maps to 1-157; sequence MLVTSSRKPS…KLNLRGFKKY (157 aa).

In terms of biological role, probably involved in the biogenesis of the ribosome. This is Probable Brix domain-containing ribosomal biogenesis protein from Methanosarcina barkeri (strain Fusaro / DSM 804).